The sequence spans 301 residues: 33 kDa chaperonin (301 aa).

2 cysteine pairs are disulfide-bonded: C240-C242 and C273-C276.

It belongs to the HSP33 family. Under oxidizing conditions two disulfide bonds are formed involving the reactive cysteines. Under reducing conditions zinc is bound to the reactive cysteines and the protein is inactive.

The protein resides in the cytoplasm. In terms of biological role, redox regulated molecular chaperone. Protects both thermally unfolding and oxidatively damaged proteins from irreversible aggregation. Plays an important role in the bacterial defense system toward oxidative stress. This chain is 33 kDa chaperonin, found in Rippkaea orientalis (strain PCC 8801 / RF-1) (Cyanothece sp. (strain PCC 8801)).